A 555-amino-acid polypeptide reads, in one-letter code: Hydrogenase-4 component G (555 aa).

Belongs to the complex I 49 kDa subunit family. [4Fe-4S] cluster serves as cofactor.

Its function is as follows. Possible component of hydrogenase 4. The polypeptide is Hydrogenase-4 component G (Escherichia coli (strain K12)).